A 511-amino-acid polypeptide reads, in one-letter code: MNGIKQLHAHCLRTGVDETKDLLQRLLLIPNLVYARKLFDHHQNSCTFLYNKLIQAYYVHHQPHESIVLYNLLSFDGLRPSHHTFNFIFAASASFSSARPLRLLHSQFFRSGFESDSFCCTTLITAYAKLGALCCARRVFDEMSKRDVPVWNAMITGYQRRGDMKAAMELFDSMPRKNVTSWTTVISGFSQNGNYSEALKMFLCMEKDKSVKPNHITVVSVLPACANLGELEIGRRLEGYARENGFFDNIYVCNATIEMYSKCGMIDVAKRLFEELGNQRNLCSWNSMIGSLATHGKHDEALTLFAQMLREGEKPDAVTFVGLLLACVHGGMVVKGQELFKSMEEVHKISPKLEHYGCMIDLLGRVGKLQEAYDLIKTMPMKPDAVVWGTLLGACSFHGNVEIAEIASEALFKLEPTNPGNCVIMSNIYAANEKWDGVLRMRKLMKKETMTKAAGYSYFVEVGVDVHKFTVEDKSHPRSYEIYQVLEEIFRRMKLEKSRFDSLLQPEQLCI.

PPR repeat units lie at residues 46–80 (CTFL…GLRP), 81–115 (SHHT…GFES), 116–146 (DSFC…MSKR), 147–181 (DVPV…NVTS), 182–213 (WTTV…SVKP), 214–248 (NHIT…GFFD), 249–279 (NIYV…LGNQ), 281–315 (NLCS…GEKP), 316–346 (DAVT…MEEV), and 352–382 (KLEH…MPMK). A type E motif region spans residues 387–462 (VWGTLLGACS…AAGYSYFVEV (76 aa)). A type E(+) motif region spans residues 463 to 494 (GVDVHKFTVEDKSHPRSYEIYQVLEEIFRRMK).

The protein belongs to the PPR family. PCMP-E subfamily.

In Arabidopsis thaliana (Mouse-ear cress), this protein is Pentatricopeptide repeat-containing protein At5g08510 (PCMP-E20).